A 98-amino-acid chain; its full sequence is Large ribosomal subunit protein uL23 (98 aa).

It belongs to the universal ribosomal protein uL23 family. In terms of assembly, part of the 50S ribosomal subunit. Contacts protein L29, and trigger factor when it is bound to the ribosome.

Its function is as follows. One of the early assembly proteins it binds 23S rRNA. One of the proteins that surrounds the polypeptide exit tunnel on the outside of the ribosome. Forms the main docking site for trigger factor binding to the ribosome. The polypeptide is Large ribosomal subunit protein uL23 (Caulobacter sp. (strain K31)).